The chain runs to 416 residues: Na(+)/H(+) antiporter NhaA (416 aa).

11 helical membrane passes run 39–59 (GIVLLIAAAAALAWANSPWAA), 82–102 (LHFWVNDALMTVFFLVVGLEI), 119–139 (LPVLAALGGVAVPALLYLALV), 146–166 (GWAVPTATDIAFAVGVLALLG), 175–195 (VFLLTLAIIDDLVAVLIIALF), 198–218 (GGLQWPMFGIAALGLAGVLLL), 234–254 (AVLWWGIWQTGAHPTLAGVVL), 281–301 (PWVTFGVMPLFALANAGVALG), 315–335 (LLMAAVAVALVAGKPLGVLLA), 353–373 (WGGLLLTGLLAGIGFTMAIFI), and 390–410 (GVLLASGLAALLGLAWGWWLQ).

The protein belongs to the NhaA Na(+)/H(+) (TC 2.A.33) antiporter family.

The protein localises to the cell inner membrane. It catalyses the reaction Na(+)(in) + 2 H(+)(out) = Na(+)(out) + 2 H(+)(in). Functionally, na(+)/H(+) antiporter that extrudes sodium in exchange for external protons. The chain is Na(+)/H(+) antiporter NhaA from Acidovorax sp. (strain JS42).